A 296-amino-acid chain; its full sequence is GTPase Era (296 aa).

Residues 3–170 enclose the Era-type G domain; sequence KSGFITIVGR…LELMVKYLPE (168 aa). Positions 11-18 are G1; sequence GRPNVGKS. 11 to 18 is a binding site for GTP; sequence GRPNVGKS. The tract at residues 37–41 is G2; that stretch reads QTTRN. The G3 stretch occupies residues 58 to 61; the sequence is DTPG. GTP contacts are provided by residues 58–62 and 120–123; these read DTPGI and NKVD. The tract at residues 120-123 is G4; sequence NKVD. The segment at 149–151 is G5; it reads ISA. Positions 201–278 constitute a KH type-2 domain; sequence LSQEVPHGIA…NIKIWVKVRK (78 aa).

The protein belongs to the TRAFAC class TrmE-Era-EngA-EngB-Septin-like GTPase superfamily. Era GTPase family. In terms of assembly, monomer.

It is found in the cytoplasm. Its subcellular location is the cell membrane. An essential GTPase that binds both GDP and GTP, with rapid nucleotide exchange. Plays a role in 16S rRNA processing and 30S ribosomal subunit biogenesis and possibly also in cell cycle regulation and energy metabolism. In Clostridium perfringens (strain 13 / Type A), this protein is GTPase Era.